Consider the following 196-residue polypeptide: UPF0314 protein Oant_0840 (196 aa).

The next 4 membrane-spanning stretches (helical) occupy residues 15–35, 65–85, 127–147, and 151–171; these read WGLG…WLYF, WYTL…TVIA, FGDS…GFLI, and LPTK…LIVI.

Belongs to the UPF0314 family.

It localises to the cell membrane. In Brucella anthropi (strain ATCC 49188 / DSM 6882 / CCUG 24695 / JCM 21032 / LMG 3331 / NBRC 15819 / NCTC 12168 / Alc 37) (Ochrobactrum anthropi), this protein is UPF0314 protein Oant_0840.